Here is a 342-residue protein sequence, read N- to C-terminus: tRNA dimethylallyltransferase (342 aa).

Residue 39 to 46 coordinates ATP; the sequence is GPTGSGKT. 41–46 is a substrate binding site; it reads TGSGKT. The segment at 64 to 67 is interaction with substrate tRNA; it reads DSMQ.

The protein belongs to the IPP transferase family. In terms of assembly, monomer. The cofactor is Mg(2+).

It catalyses the reaction adenosine(37) in tRNA + dimethylallyl diphosphate = N(6)-dimethylallyladenosine(37) in tRNA + diphosphate. In terms of biological role, catalyzes the transfer of a dimethylallyl group onto the adenine at position 37 in tRNAs that read codons beginning with uridine, leading to the formation of N6-(dimethylallyl)adenosine (i(6)A). This Chlamydia caviae (strain ATCC VR-813 / DSM 19441 / 03DC25 / GPIC) (Chlamydophila caviae) protein is tRNA dimethylallyltransferase.